A 163-amino-acid polypeptide reads, in one-letter code: Globin CTT-Z (163 aa).

The N-terminal stretch at 1-16 is a signal peptide; sequence MKFFAVLALCIVGAIA. The Globin domain occupies 18-162; sequence PLTSDEAALV…VYTAVFQIVT (145 aa). Heme b contacts are provided by histidine 76 and histidine 111.

The protein belongs to the globin family.

The sequence is that of Globin CTT-Z (CTT-Z) from Chironomus thummi piger (Midge).